The chain runs to 406 residues: Argininosuccinate synthase (406 aa).

8-16 (AYSGGLDTS) contributes to the ATP binding site. Residue tyrosine 86 coordinates L-citrulline. Position 116 (glycine 116) interacts with ATP. L-aspartate contacts are provided by threonine 118, asparagine 122, and aspartate 123. Asparagine 122 contributes to the L-citrulline binding site. L-citrulline is bound by residues arginine 126, serine 174, serine 183, glutamate 259, and tyrosine 271.

The protein belongs to the argininosuccinate synthase family. Type 1 subfamily. As to quaternary structure, homotetramer.

It is found in the cytoplasm. The enzyme catalyses L-citrulline + L-aspartate + ATP = 2-(N(omega)-L-arginino)succinate + AMP + diphosphate + H(+). Its pathway is amino-acid biosynthesis; L-arginine biosynthesis; L-arginine from L-ornithine and carbamoyl phosphate: step 2/3. This Dehalococcoides mccartyi (strain ATCC BAA-2100 / JCM 16839 / KCTC 5957 / BAV1) protein is Argininosuccinate synthase.